We begin with the raw amino-acid sequence, 99 residues long: Ubiquitin-related modifier 1 (99 aa).

Glycine 99 carries the 1-thioglycine modification. Glycine 99 is covalently cross-linked (Glycyl lysine isopeptide (Gly-Lys) (interchain with K-? in acceptor proteins)).

This sequence belongs to the URM1 family. Post-translationally, C-terminal thiocarboxylation occurs in 2 steps, it is first acyl-adenylated (-COAMP) via the hesA/moeB/thiF part of UBA4, then thiocarboxylated (-COSH) via the rhodanese domain of UBA4.

The protein resides in the cytoplasm. It functions in the pathway tRNA modification; 5-methoxycarbonylmethyl-2-thiouridine-tRNA biosynthesis. Functionally, acts as a sulfur carrier required for 2-thiolation of mcm(5)S(2)U at tRNA wobble positions of cytosolic tRNA(Lys), tRNA(Glu) and tRNA(Gln). Serves as sulfur donor in tRNA 2-thiolation reaction by being thiocarboxylated (-COSH) at its C-terminus by the MOCS3 homolog UBA4. The sulfur is then transferred to tRNA to form 2-thiolation of mcm(5)S(2)U. Prior mcm(5) tRNA modification by the elongator complex is required for 2-thiolation. Also acts as a ubiquitin-like protein (UBL) that is covalently conjugated via an isopeptide bond to lysine residues of target proteins such as AHP1. The thiocarboxylated form serves as substrate for conjugation and oxidative stress specifically induces the formation of UBL-protein conjugates. The protein is Ubiquitin-related modifier 1 of Yarrowia lipolytica (strain CLIB 122 / E 150) (Yeast).